A 200-amino-acid chain; its full sequence is 3-isopropylmalate dehydratase small subunit (200 aa).

It belongs to the LeuD family. LeuD type 1 subfamily. As to quaternary structure, heterodimer of LeuC and LeuD.

The catalysed reaction is (2R,3S)-3-isopropylmalate = (2S)-2-isopropylmalate. The protein operates within amino-acid biosynthesis; L-leucine biosynthesis; L-leucine from 3-methyl-2-oxobutanoate: step 2/4. Functionally, catalyzes the isomerization between 2-isopropylmalate and 3-isopropylmalate, via the formation of 2-isopropylmaleate. This chain is 3-isopropylmalate dehydratase small subunit, found in Vibrio vulnificus (strain CMCP6).